A 213-amino-acid chain; its full sequence is Cytochrome b6 (213 aa).

Residues 30 to 50 (IFYCLGGLTLLAFLVQCVTGL) form a helical membrane-spanning segment. Cysteine 33 provides a ligand contact to heme c. Heme b-binding residues include histidine 84 and histidine 98. A run of 3 helical transmembrane segments spans residues 88-108 (ANLM…TGSF), 114-134 (LNWL…FTGY), and 184-204 (LHVM…FIMI). Heme b-binding residues include histidine 185 and histidine 200.

This sequence belongs to the cytochrome b family. PetB subfamily. The subunits of the cytochrome bc complex are a Rieske Fe-S protein (PetC), cytochrome b6 (PetB), subunit IV (PetD), and a diheme cytochrome c (PetX). Heme b is required as a cofactor. The cofactor is heme c.

The protein localises to the cell membrane. In terms of biological role, component of the cytochrome bc complex which donates electrons to the photosynthetic reaction center. The chain is Cytochrome b6 from Heliobacterium mobile (Heliobacillus mobilis).